The following is a 399-amino-acid chain: Argininosuccinate synthase (399 aa).

8–16 (AYSGGLDTS) serves as a coordination point for ATP. Tyrosine 87 lines the L-citrulline pocket. Glycine 117 is an ATP binding site. L-aspartate contacts are provided by threonine 119, asparagine 123, and aspartate 124. Asparagine 123 contacts L-citrulline. L-citrulline-binding residues include arginine 127, serine 175, glutamate 260, and tyrosine 272.

The protein belongs to the argininosuccinate synthase family. Type 1 subfamily. Homotetramer.

Its subcellular location is the cytoplasm. It carries out the reaction L-citrulline + L-aspartate + ATP = 2-(N(omega)-L-arginino)succinate + AMP + diphosphate + H(+). The protein operates within amino-acid biosynthesis; L-arginine biosynthesis; L-arginine from L-ornithine and carbamoyl phosphate: step 2/3. The chain is Argininosuccinate synthase from Rhodococcus erythropolis (strain PR4 / NBRC 100887).